The following is a 224-amino-acid chain: Cytidylate kinase (224 aa).

Position 11 to 19 (11 to 19 (GPAGAGKST)) interacts with ATP.

Belongs to the cytidylate kinase family. Type 1 subfamily.

It localises to the cytoplasm. The enzyme catalyses CMP + ATP = CDP + ADP. It catalyses the reaction dCMP + ATP = dCDP + ADP. In Exiguobacterium sp. (strain ATCC BAA-1283 / AT1b), this protein is Cytidylate kinase.